A 111-amino-acid chain; its full sequence is Putative protein YddJ (111 aa).

The chain is Putative protein YddJ (yddJ) from Escherichia coli (strain K12).